Consider the following 544-residue polypeptide: Membrane protein insertase YidC (544 aa).

Helical transmembrane passes span leucine 13–leucine 33, tryptophan 343–phenylalanine 363, leucine 409–valine 429, leucine 461–leucine 481, and methionine 506–isoleucine 526.

It belongs to the OXA1/ALB3/YidC family. Type 1 subfamily. In terms of assembly, interacts with the Sec translocase complex via SecD. Specifically interacts with transmembrane segments of nascent integral membrane proteins during membrane integration.

Its subcellular location is the cell inner membrane. Required for the insertion and/or proper folding and/or complex formation of integral membrane proteins into the membrane. Involved in integration of membrane proteins that insert both dependently and independently of the Sec translocase complex, as well as at least some lipoproteins. Aids folding of multispanning membrane proteins. The chain is Membrane protein insertase YidC from Borreliella burgdorferi (strain ATCC 35210 / DSM 4680 / CIP 102532 / B31) (Borrelia burgdorferi).